The primary structure comprises 378 residues: MAGTDREKALDAALAQIERQFGKGAVMRMGDRTQEPIEVISTGSTALDIALGVGGLPRGRVVEIYGPESSGKTTLTLHAVANAQKAGGQVAFVDAEHALDPEYAKKLGVDIDNLILSQPDNGEQALEIVDMLVRSGALDLIVIDSVAALVPRAEIEGEMGDSHVGLQARLMSQALRKITSALNQSKTTAIFINQLREKIGVMFGSPETTTGGRALKFYASVRLDIRRIETLKDGTDAVGNRTRVKVVKNKVAPPFKQAEFDILYGQGISREGGLIDMGVEHGFVRKAGAWYTYEGDQLGQGKENARNFLKDNPDLADEIERKIKEKLGVGVRPDAAKAEAATDAAAAADTAGTDDAAKSVPAPASKTAKATKATAVKS.

66–73 (GPESSGKT) is an ATP binding site. The disordered stretch occupies residues 333–378 (PDAAKAEAATDAAAAADTAGTDDAAKSVPAPASKTAKATKATAVKS). Low complexity predominate over residues 338 to 378 (AEAATDAAAAADTAGTDDAAKSVPAPASKTAKATKATAVKS).

Belongs to the RecA family.

The protein resides in the cytoplasm. Can catalyze the hydrolysis of ATP in the presence of single-stranded DNA, the ATP-dependent uptake of single-stranded DNA by duplex DNA, and the ATP-dependent hybridization of homologous single-stranded DNAs. It interacts with LexA causing its activation and leading to its autocatalytic cleavage. The sequence is that of Protein RecA from Streptomyces venezuelae (strain ATCC 10712 / CBS 650.69 / DSM 40230 / JCM 4526 / NBRC 13096 / PD 04745).